The following is a 388-amino-acid chain: Chorismate synthase (388 aa).

NADP(+) contacts are provided by Arg-39 and Arg-45. Residues 130 to 132 (RSS), 251 to 252 (NA), Gly-296, 311 to 315 (KPIPT), and Arg-337 each bind FMN.

Belongs to the chorismate synthase family. As to quaternary structure, homotetramer. FMNH2 serves as cofactor.

It carries out the reaction 5-O-(1-carboxyvinyl)-3-phosphoshikimate = chorismate + phosphate. Its pathway is metabolic intermediate biosynthesis; chorismate biosynthesis; chorismate from D-erythrose 4-phosphate and phosphoenolpyruvate: step 7/7. Functionally, catalyzes the anti-1,4-elimination of the C-3 phosphate and the C-6 proR hydrogen from 5-enolpyruvylshikimate-3-phosphate (EPSP) to yield chorismate, which is the branch point compound that serves as the starting substrate for the three terminal pathways of aromatic amino acid biosynthesis. This reaction introduces a second double bond into the aromatic ring system. The protein is Chorismate synthase of Geobacillus sp. (strain WCH70).